Reading from the N-terminus, the 208-residue chain is Uracil phosphoribosyltransferase (208 aa).

5-phospho-alpha-D-ribose 1-diphosphate contacts are provided by residues Arg78, Arg103, and 130–138 (DPMLATGGS). Uracil-binding positions include Ile193 and 198-200 (GDA). Asp199 is a binding site for 5-phospho-alpha-D-ribose 1-diphosphate.

It belongs to the UPRTase family. It depends on Mg(2+) as a cofactor.

The enzyme catalyses UMP + diphosphate = 5-phospho-alpha-D-ribose 1-diphosphate + uracil. The protein operates within pyrimidine metabolism; UMP biosynthesis via salvage pathway; UMP from uracil: step 1/1. With respect to regulation, allosterically activated by GTP. Its function is as follows. Catalyzes the conversion of uracil and 5-phospho-alpha-D-ribose 1-diphosphate (PRPP) to UMP and diphosphate. The chain is Uracil phosphoribosyltransferase from Enterobacter sp. (strain 638).